The chain runs to 511 residues: 2,3-bisphosphoglycerate-independent phosphoglycerate mutase (511 aa).

Residues Asp14 and Ser64 each contribute to the Mn(2+) site. Ser64 functions as the Phosphoserine intermediate in the catalytic mechanism. Substrate contacts are provided by residues His125, 155–156, Arg187, Arg193, 259–262, and Lys333; these read RD and RADR. Residues Asp400, His404, Asp441, His442, and His460 each contribute to the Mn(2+) site.

The protein belongs to the BPG-independent phosphoglycerate mutase family. Monomer. The cofactor is Mn(2+).

It carries out the reaction (2R)-2-phosphoglycerate = (2R)-3-phosphoglycerate. It participates in carbohydrate degradation; glycolysis; pyruvate from D-glyceraldehyde 3-phosphate: step 3/5. Functionally, catalyzes the interconversion of 2-phosphoglycerate and 3-phosphoglycerate. This is 2,3-bisphosphoglycerate-independent phosphoglycerate mutase from Pseudomonas entomophila (strain L48).